A 185-amino-acid chain; its full sequence is Adenylyl-sulfate kinase (185 aa).

13-20 (GLSGAGKT) is an ATP binding site. Ser-87 functions as the Phosphoserine intermediate in the catalytic mechanism.

The protein belongs to the APS kinase family.

It carries out the reaction adenosine 5'-phosphosulfate + ATP = 3'-phosphoadenylyl sulfate + ADP + H(+). Its pathway is sulfur metabolism; hydrogen sulfide biosynthesis; sulfite from sulfate: step 2/3. In terms of biological role, catalyzes the synthesis of activated sulfate. The polypeptide is Adenylyl-sulfate kinase (Halothermothrix orenii (strain H 168 / OCM 544 / DSM 9562)).